The sequence spans 688 residues: MLIRFKINEIECEVDEEKEDLTILQACTANGIEIPRFCYHEKLTIAGNCRMCLVYVTNEEKLLAACGIPLDENFDDESIETEIDEILKAREGVMEFLLINHPLDCPICDQGGECDLQEQTIAYGLDTGRFYIKKRAVEVKAFGRLIKGIMTRCIHCTRCVRFLTEIAGVNELGVLGRGYNMEIGTYKKNVIIESELSGNIIDLCPVGALTSAVYAYKGRPWELKNIKGIDIFDTVLTPINYQVKGGEIFRILPRINDRLNEEWITDKVRFHYESYKIIEKMRKDTPSYKIQANKFIELSWKTALKMVFKVLLNKKNKVDLIIGSKINSTNLRIYKELMNRLGSKNYITENGLLFKKFNYDFRENYINSNDLYNVDQNDLVLLCGINLRVESPLLNIKLRNINFGDDEIETRKKIGIIGNKFDWKQESEYLGSTVNSMLKVFEGRFPYCQQIKKSKAPLILVGSSLLSRIAISLQEIRAAFEIASNIKPENVLLITQGANFGMALEEGIFKENFSKGGNVLYSIDSNEYKVSKTINYIIYQGILNDTFENKIDLYLPSKHYFEDFESDREIYVNTFGQRSEIEKLRISKGNKIKENSMIGYIQLMYLNKKEMNRKEKEQKEIKITYRGIKQKEKRQVKINKNLTINNIIDNYYMTDINSRLSKNLMITGQLRKEKKIMEAGSWKNKTCI.

A 2Fe-2S ferredoxin-type domain is found at 1–85; it reads MLIRFKINEI…DESIETEIDE (85 aa). [2Fe-2S] cluster contacts are provided by C38, C49, C52, and C66. The 40-residue stretch at 85–124 folds into the 4Fe-4S His(Cys)3-ligated-type domain; sequence EILKAREGVMEFLLINHPLDCPICDQGGECDLQEQTIAYG. Positions 101, 105, 108, 114, 153, 156, 159, and 204 each coordinate [4Fe-4S] cluster. In terms of domain architecture, 4Fe-4S Mo/W bis-MGD-type spans 223 to 279; it reads LKNIKGIDIFDTVLTPINYQVKGGEIFRILPRINDRLNEEWITDKVRFHYESYKIIE.

This sequence belongs to the complex I 75 kDa subunit family. Complex I is composed of about 45 different subunits. The cofactor is [2Fe-2S] cluster. It depends on [4Fe-4S] cluster as a cofactor.

It localises to the mitochondrion inner membrane. It catalyses the reaction a ubiquinone + NADH + 5 H(+)(in) = a ubiquinol + NAD(+) + 4 H(+)(out). Core subunit of the mitochondrial membrane respiratory chain NADH dehydrogenase (Complex I) that is believed to belong to the minimal assembly required for catalysis. Complex I functions in the transfer of electrons from NADH to the respiratory chain. The immediate electron acceptor for the enzyme is believed to be ubiquinone. This is the largest subunit of complex I and it is a component of the iron-sulfur (IP) fragment of the enzyme. It may form part of the active site crevice where NADH is oxidized. This Dictyostelium citrinum (Slime mold) protein is NADH-ubiquinone oxidoreductase 75 kDa subunit (nad11).